A 154-amino-acid chain; its full sequence is Large ribosomal subunit protein uL15 (154 aa).

A compositionally biased stretch (basic and acidic residues) spans 1 to 13 (MKLNELRDHEGAT). A disordered region spans residues 1–44 (MKLNELRDHEGATKNRKRIGRGIGSGTGKTGGCGVKGQKSRSGV). Gly residues predominate over residues 21 to 35 (RGIGSGTGKTGGCGV).

This sequence belongs to the universal ribosomal protein uL15 family. In terms of assembly, part of the 50S ribosomal subunit.

Its function is as follows. Binds to the 23S rRNA. The polypeptide is Large ribosomal subunit protein uL15 (Bartonella bacilliformis (strain ATCC 35685 / KC583 / Herrer 020/F12,63)).